The sequence spans 223 residues: Pre-hexon-linking protein VIII (223 aa).

Position 64 is a phosphothreonine; by host (Thr64). Residues 112–153 (GALAPRDLYALTLRGRGIQLNEDLPLSASTLRPDGIFQLGGG) constitute a propeptide that is removed on maturation. Position 170 is a phosphoserine; by host (Ser170).

This sequence belongs to the adenoviridae hexon-linking protein family. In terms of assembly, interacts with the peripentonal hexons as well as the hexons in the facets. Part of a complex composed of the core-capsid bridging protein, the endosome lysis protein VI and the hexon-linking protein VIII; these interactions bridge the virus core to the capsid. In terms of processing, cleaved by the viral protease during virion maturation. May cause the middle segment to be shed from the capsid.

The protein resides in the virion. The protein localises to the host nucleus. Structural component of the virion that acts as a cement protein on the capsid interior and which glue the peripentonal hexons and group-of-nine hexons together. This chain is Pre-hexon-linking protein VIII, found in Porcine adenovirus A serotype 3 (PAdV-3).